Consider the following 1604-residue polypeptide: Calmodulin-regulated spectrin-associated protein 1 (1604 aa).

At serine 216 the chain carries Phosphoserine. Residues 235-350 (PVDFARVVRY…FIAELFWWFE (116 aa)) form the Calponin-homology (CH) domain. Residues serine 390, serine 394, and serine 435 each carry the phosphoserine modification. Positions 394–413 (SPAAMSPADLPPSTQPLTEG) are disordered. Residues 444–491 (RQKQQKVSQAEEIPDQRHRSNSLTRADGQPRGAAIAWPDKKNRPVSQP) are disordered. Position 531 is a phosphothreonine (threonine 531). Phosphoserine is present on residues serine 571, serine 574, serine 581, serine 593, serine 607, serine 647, serine 739, serine 745, serine 755, and serine 757. The disordered stretch occupies residues 642 to 671 (MAKRPSEGSQPLVRKKVTGSHGSRDLNRTF). Over residues 784 to 806 (EEESAKLQEDMKVKEHEDKDDAS) the composition is skewed to basic and acidic residues. Disordered stretches follow at residues 784-824 (EEES…SMSM) and 842-888 (LNSC…KDPA). 2 stretches are compositionally biased toward low complexity: residues 813–824 (LSTTSQLSSMSM) and 847–858 (TKSSTSSSQKTT). The span at 874 to 886 (QKREQSPSRHSKD) shows a compositional bias: basic and acidic residues. A sufficient for interaction with SPTBN1 region spans residues 888-909 (ASLLASELVQLHMQLEEKRRAI). 2 coiled-coil regions span residues 890-926 (LLAS…QRLK) and 1026-1058 (DVNE…QEQL). A sufficient for interaction with calmodulin region spans residues 920–939 (SARQRLKLGKAAFLHVVKKG). Disordered regions lie at residues 1085–1163 (FVEP…GELP), 1246–1271 (PDED…KPGV), and 1298–1448 (RKAE…DRDW). The residue at position 1090 (serine 1090) is a Phosphoserine. A compositionally biased stretch (basic and acidic residues) spans 1113–1124 (RPAELKVPKDRQ). Polar residues predominate over residues 1125-1137 (QGCSRSKTPTPSV). Serine 1154 carries the phosphoserine modification. Basic and acidic residues-rich tracts occupy residues 1246-1258 (PDED…HESS) and 1298-1348 (RKAE…EYLR). The stretch at 1286 to 1357 (AKKRAAFLLK…RRKQQQALEE (72 aa)) forms a coiled coil. Over residues 1363 to 1374 (PKSKPKKPRPKS) the composition is skewed to basic residues. A compositionally biased stretch (polar residues) spans 1382 to 1394 (SDSGTKCSSTPDN). Over residues 1395 to 1412 (LSQTHSGSSLSLASAATT) the composition is skewed to low complexity. Phosphoserine occurs at positions 1400 and 1429. A CKK domain is found at 1465–1599 (GPKLFKEPSS…QPKRPTVPKK (135 aa)). Position 1539 is a phosphotyrosine (tyrosine 1539).

It belongs to the CAMSAP1 family. Interacts with spectrin via SPTBN1; the interaction is direct. Interacts with calmodulin; calcium-dependent it prevents interaction with spectrin. In brain, specifically expressed in astrocytes (at protein level).

The protein resides in the cytoplasm. It is found in the cytoskeleton. Key microtubule-organizing protein that specifically binds the minus-end of non-centrosomal microtubules and regulates their dynamics and organization. Specifically recognizes growing microtubule minus-ends and stabilizes microtubules. Acts on free microtubule minus-ends that are not capped by microtubule-nucleating proteins or other factors and protects microtubule minus-ends from depolymerization. In contrast to CAMSAP2 and CAMSAP3, tracks along the growing tips of minus-end microtubules without significantly affecting the polymerization rate: binds at the very tip of the microtubules minus-end and acts as a minus-end tracking protein (-TIP) that dissociates from microtubules after allowing tubulin incorporation. Through interaction with spectrin may regulate neurite outgrowth. The chain is Calmodulin-regulated spectrin-associated protein 1 (Camsap1) from Rattus norvegicus (Rat).